The chain runs to 476 residues: Proline dehydrogenase 2, mitochondrial (476 aa).

The N-terminal 29 residues, 1–29, are a transit peptide targeting the mitochondrion; it reads MANRFLRPNLIHRFSTVSPVGPPTTIIPE.

This sequence belongs to the proline oxidase family. FAD is required as a cofactor. Expressed in the vascular tissue and in the abscission zone of petals, sepals, stamina, pistils and siliques. Not detected in petioles.

Its subcellular location is the mitochondrion. It catalyses the reaction L-proline + a quinone = (S)-1-pyrroline-5-carboxylate + a quinol + H(+). The protein operates within amino-acid degradation; L-proline degradation into L-glutamate; L-glutamate from L-proline: step 1/2. Its function is as follows. Converts proline to delta-1-pyrroline-5-carboxylate. The chain is Proline dehydrogenase 2, mitochondrial (POX2) from Arabidopsis thaliana (Mouse-ear cress).